A 171-amino-acid polypeptide reads, in one-letter code: Calcium channel flower homolog (171 aa).

Residues 1–31 (MSGSVAAGAAAGPVPPAQEEGMTWWYRWLCR) are Cytoplasmic-facing. A helical membrane pass occupies residues 32-52 (LAGVLGAVSCAISGLFNCVTI). Residues 53–56 (HPLN) lie on the Extracellular side of the membrane. Residues 57 to 77 (IAAGVWMIMNAFILLLCEAPF) traverse the membrane as a helical segment. Residues 78 to 101 (CCQFVEFANTVAEKVDRLRSWQKA) lie on the Cytoplasmic side of the membrane. Residues 102-122 (VFYCGMAIVPIVMSLTLTTLL) form a helical membrane-spanning segment. Residues 123-124 (GN) lie on the Extracellular side of the membrane. A helical membrane pass occupies residues 125-141 (AIAFATGVLYGLSALGK). Over 142–171 (KGDAISYARIQQQRQQADEEKLAETFEGEL) the chain is Cytoplasmic.

This sequence belongs to the calcium channel flower family. In terms of assembly, interacts with adaptor protein complex 2 (AP-2). Expressed in calyces in the brain (at protein level). Detected in cultured hippocampal neurons (at protein level).

Its subcellular location is the cell membrane. It is found in the cytoplasmic vesicle. The protein resides in the secretory vesicle. The protein localises to the synaptic vesicle. It localises to the golgi apparatus. Its subcellular location is the vesicle. In terms of biological role, transmembrane protein which mediates synaptic endocytosis and fitness-based cell culling. In response to different stimulus strengths, controls two major modes of synaptic vesicle (SV) retrieval in hippocampal neurons; Clathrin-mediated endocytosis (CME) in response to mild stimulation and activity-dependent bulk endocytosis (ADBE) in response to strong stimulation. In cytotoxic T-lymphoocytes (CTLs) facilitates calcium-dependent endocytosis of cytotoxic granules (CGs) at the immuno synapse. Different isoforms work as fitness fingerprints in 'loser' and 'winner' cells and thereby mediate win/lose decisions as part of the cell competition process. This Rattus norvegicus (Rat) protein is Calcium channel flower homolog (Cacfd1).